We begin with the raw amino-acid sequence, 100 residues long: MARKSLIQRERKRKKLEQKYHWIRRSSKTEINKVPSLSDKWEIHGKLQSPPRNSAPIRLHRRCFSTGRPRANYRDFGLSGHILREMVHACLLPGATRSSW.

Belongs to the universal ribosomal protein uS14 family. Part of the 30S ribosomal subunit.

The protein localises to the plastid. Its subcellular location is the chloroplast. Functionally, binds 16S rRNA, required for the assembly of 30S particles. The sequence is that of Small ribosomal subunit protein uS14c from Chloranthus spicatus (Chulantree).